Reading from the N-terminus, the 339-residue chain is Large ribosomal subunit protein uL10 (339 aa).

The interval 305–339 is disordered; sequence TQPQQEEKVEEAEEEEEEEEASEEDALAGLGALFG. Over residues 312-330 the composition is skewed to acidic residues; the sequence is KVEEAEEEEEEEEASEEDA.

Belongs to the universal ribosomal protein uL10 family. Part of the 50S ribosomal subunit. Forms part of the ribosomal stalk which helps the ribosome interact with GTP-bound translation factors. Forms a heptameric L10(L12)2(L12)2(L12)2 complex, where L10 forms an elongated spine to which the L12 dimers bind in a sequential fashion.

Functionally, forms part of the ribosomal stalk, playing a central role in the interaction of the ribosome with GTP-bound translation factors. The protein is Large ribosomal subunit protein uL10 of Thermococcus onnurineus (strain NA1).